We begin with the raw amino-acid sequence, 219 residues long: NAD(P)H-quinone oxidoreductase subunit I (219 aa).

4Fe-4S ferredoxin-type domains lie at Gly-55 to Val-84 and Arg-95 to Glu-124. Residues Cys-64, Cys-67, Cys-70, Cys-74, Cys-104, Cys-107, Cys-110, and Cys-114 each coordinate [4Fe-4S] cluster.

The protein belongs to the complex I 23 kDa subunit family. In terms of assembly, NDH-1 is composed of at least 11 different subunits. [4Fe-4S] cluster is required as a cofactor.

The protein localises to the cellular thylakoid membrane. The enzyme catalyses a plastoquinone + NADH + (n+1) H(+)(in) = a plastoquinol + NAD(+) + n H(+)(out). The catalysed reaction is a plastoquinone + NADPH + (n+1) H(+)(in) = a plastoquinol + NADP(+) + n H(+)(out). In terms of biological role, NDH-1 shuttles electrons from an unknown electron donor, via FMN and iron-sulfur (Fe-S) centers, to quinones in the respiratory and/or the photosynthetic chain. The immediate electron acceptor for the enzyme in this species is believed to be plastoquinone. Couples the redox reaction to proton translocation, and thus conserves the redox energy in a proton gradient. This chain is NAD(P)H-quinone oxidoreductase subunit I, found in Prochlorococcus marinus (strain SARG / CCMP1375 / SS120).